A 1428-amino-acid polypeptide reads, in one-letter code: uncharacterized protein (1428 aa).

Disordered stretches follow at residues 1-53 (MAKK…AFKV), 249-274 (DIKHTPNKETQPSNQVDDSLKSKDSK), and 377-413 (KNGIQEDSQSTDDSSKDDDNNSESNDMSPHNDAETRA). Over residues 16 to 33 (ATTSIPSRSASSPANKNQ) the composition is skewed to polar residues. Basic and acidic residues predominate over residues 34–51 (VKGEKNNKTQKVEPKNAF). A compositionally biased stretch (polar residues) spans 256 to 265 (KETQPSNQVD). Residues 641–811 (IDAVNNSQLL…FEGSNLITIP (171 aa)) form the Helicase ATP-binding domain. 654 to 661 (GDTGCGKS) serves as a coordination point for ATP. The DEAH box signature appears at 758–761 (DEVH). A Helicase C-terminal domain is found at 886 to 1064 (LIVYLLKYIF…EVVLRVKMCQ (179 aa)).

It belongs to the helicase family. SKI2 subfamily.

It is found in the cytoplasm. This is an uncharacterized protein from Schizosaccharomyces pombe (strain 972 / ATCC 24843) (Fission yeast).